A 227-amino-acid chain; its full sequence is Phosphoribosylformylglycinamidine synthase subunit PurQ (227 aa).

The Glutamine amidotransferase type-1 domain maps to 2–227; sequence RWAIVRFPGA…FLGLVKEVAR (226 aa). Cys85 acts as the Nucleophile in catalysis. Catalysis depends on residues His200 and Glu202.

As to quaternary structure, part of the FGAM synthase complex composed of 1 PurL, 1 PurQ and 2 PurS subunits.

The protein resides in the cytoplasm. It carries out the reaction N(2)-formyl-N(1)-(5-phospho-beta-D-ribosyl)glycinamide + L-glutamine + ATP + H2O = 2-formamido-N(1)-(5-O-phospho-beta-D-ribosyl)acetamidine + L-glutamate + ADP + phosphate + H(+). It catalyses the reaction L-glutamine + H2O = L-glutamate + NH4(+). It participates in purine metabolism; IMP biosynthesis via de novo pathway; 5-amino-1-(5-phospho-D-ribosyl)imidazole from N(2)-formyl-N(1)-(5-phospho-D-ribosyl)glycinamide: step 1/2. Part of the phosphoribosylformylglycinamidine synthase complex involved in the purines biosynthetic pathway. Catalyzes the ATP-dependent conversion of formylglycinamide ribonucleotide (FGAR) and glutamine to yield formylglycinamidine ribonucleotide (FGAM) and glutamate. The FGAM synthase complex is composed of three subunits. PurQ produces an ammonia molecule by converting glutamine to glutamate. PurL transfers the ammonia molecule to FGAR to form FGAM in an ATP-dependent manner. PurS interacts with PurQ and PurL and is thought to assist in the transfer of the ammonia molecule from PurQ to PurL. This Thermus thermophilus (strain ATCC 27634 / DSM 579 / HB8) protein is Phosphoribosylformylglycinamidine synthase subunit PurQ.